Consider the following 329-residue polypeptide: Flotillin-like protein FloA (329 aa).

A run of 2 helical transmembrane segments spans residues 6-26 and 27-47; these read FIVIAVIIIVALLILFSFVPI and GLWISALAAGVHVGIGTLVGM.

The protein belongs to the flotillin-like FloA family. As to quaternary structure, homooligomerizes.

The protein resides in the cell membrane. The protein localises to the membrane raft. Functionally, found in functional membrane microdomains (FMM) that may be equivalent to eukaryotic membrane rafts. FMMs are highly dynamic and increase in number as cells age. Flotillins are thought to be important factors in membrane fluidity. The polypeptide is Flotillin-like protein FloA (Staphylococcus aureus (strain JH1)).